The chain runs to 152 residues: ASP external chaperone (152 aa).

Positions 1–22 (MNKPVTLLLATLLAPLSGQLCA) are cleaved as a signal peptide.

As to quaternary structure, forms a complex with the serine protease ASP in the periplasm. After translocation of the ASP-ORF2 complex from the periplasm to the extracellular space, the complex is dissociated in a pH-dependent manner.

The protein localises to the periplasm. It localises to the secreted. Its activity is regulated as follows. Degraded by ASP after secretion and dissociation of the ASP-ORF2 complex. Required for the production of the active form of the Aeromonas extracellular serine protease (ASP). Acts as a chaperone that helps ASP form an active structure in the periplasm. Formation of a complex with ASP in the periplasm also inactivates the protease activity and likely protects ASP from intrinsic proteases. Dissociation of the ASP-ORF2 complex after secretion in the extracellular space generates an active ASP. This is ASP external chaperone from Aeromonas sobria.